The chain runs to 57 residues: Andropin (57 aa).

Residues methionine 1–alanine 23 form the signal peptide.

It belongs to the andropin family. Ejaculatory duct of adult males.

It localises to the secreted. Male-specific peptide with moderate activity against Gram-positive bacteria. This chain is Andropin (Anp), found in Drosophila sechellia (Fruit fly).